A 451-amino-acid polypeptide reads, in one-letter code: Glucose-6-phosphate isomerase (451 aa).

E291 acts as the Proton donor in catalysis. Catalysis depends on residues H312 and K426.

The protein belongs to the GPI family.

It localises to the cytoplasm. The catalysed reaction is alpha-D-glucose 6-phosphate = beta-D-fructose 6-phosphate. It functions in the pathway carbohydrate biosynthesis; gluconeogenesis. It participates in carbohydrate degradation; glycolysis; D-glyceraldehyde 3-phosphate and glycerone phosphate from D-glucose: step 2/4. Its function is as follows. Catalyzes the reversible isomerization of glucose-6-phosphate to fructose-6-phosphate. The polypeptide is Glucose-6-phosphate isomerase (Thermoanaerobacter sp. (strain X514)).